Consider the following 337-residue polypeptide: Heme A synthase (337 aa).

Helical transmembrane passes span 6–26 (ITKWLCINCIMVIATIVIGGI), 87–107 (FIHRLLGRITALIYIVPVIYF), 119–139 (LPYIIALLLFCVQGFIGWYMV), 154–174 (LAFHLIIAVIIYHILFYQLIK), and 192–212 (LIFSGIAITVVYVQIFLGALV). Histidine 256 lines the heme pocket. 3 consecutive transmembrane segments (helical) span residues 258–278 (LVGYSVFLVVVVLIICLLKIE), 285–305 (IAYFLMIALFMQVSTGIITLL), and 308–328 (VPIIIASIHQLFAIILLSVII). Histidine 316 is a binding site for heme.

This sequence belongs to the COX15/CtaA family. Type 2 subfamily. As to quaternary structure, interacts with CtaB. Heme b serves as cofactor.

It is found in the cell membrane. The enzyme catalyses Fe(II)-heme o + 2 A + H2O = Fe(II)-heme a + 2 AH2. Its pathway is porphyrin-containing compound metabolism; heme A biosynthesis; heme A from heme O: step 1/1. Functionally, catalyzes the conversion of heme O to heme A by two successive hydroxylations of the methyl group at C8. The first hydroxylation forms heme I, the second hydroxylation results in an unstable dihydroxymethyl group, which spontaneously dehydrates, resulting in the formyl group of heme A. The protein is Heme A synthase of Rickettsia rickettsii (strain Iowa).